Consider the following 570-residue polypeptide: NADPH oxidase 2 (570 aa).

Residues 2–9 lie on the Cytoplasmic side of the membrane; the sequence is GNWVVNEG. The chain crosses the membrane as a helical span at residues 10–36; that stretch reads ISIFVILVWLGMNVFLFVWYYRVYDIP. The Extracellular portion of the chain corresponds to 37-46; sequence DKFFYTRKLL. The chain crosses the membrane as a helical span at residues 47–72; sequence GSALALARAPAACLNFNCMLILLPVC. In terms of domain architecture, Ferric oxidoreductase spans 54-286; it reads RAPAACLNFN…MFLYLCERLV (233 aa). Residues 73 to 95 are Cytoplasmic-facing; it reads RNLLSFLRGSSACCSTRIRRQLD. A helical membrane pass occupies residues 96-130; the sequence is RNLTFHKMVAWMIALHTAIHTIAHLFNVEWCVNAR. Heme b is bound by residues histidine 101 and histidine 115. Over 131–163 the chain is Extracellular; it reads VNNSDPYSIALSDIGDKPNETYLNFVRQRIKNP. Asparagine 132 and asparagine 149 each carry an N-linked (GlcNAc...) asparagine glycan. Lysine 161 participates in a covalent cross-link: Glycyl lysine isopeptide (Lys-Gly) (interchain with G-Cter in ubiquitin). A helical transmembrane segment spans residues 164–194; that stretch reads EGGLYVAVTRLAGITGVVITLCLILIITSST. The Cytoplasmic portion of the chain corresponds to 195-203; the sequence is KTIRRSYFE. FAD is bound by residues arginine 199 and serine 200. Residues 204–222 traverse the membrane as a helical segment; that stretch reads VFWYTHHLFVIFFIGLAIH. Tryptophan 206, histidine 209, histidine 222, arginine 226, and isoleucine 227 together coordinate heme b. Topologically, residues 223 to 267 are extracellular; it reads GAQRIVRGQTAESLLKHQPRNCYQNISQWGKIENCPIPEFSGNPP. N-linked (GlcNAc...) asparagine glycosylation occurs at asparagine 247. Methionine 268, tyrosine 280, and arginine 287 together coordinate heme b. A helical transmembrane segment spans residues 268-285; sequence MTWKWIVGPMFLYLCERL. Over 286-570 the chain is Cytoplasmic; it reads VRFWRSQQKV…VHFIFNKENF (285 aa). The 111-residue stretch at 287–397 folds into the FAD-binding FR-type domain; the sequence is RFWRSQQKVV…DGPFGTASED (111 aa). Glycyl lysine isopeptide (Lys-Gly) (interchain with G-Cter in ubiquitin) cross-links involve residues lysine 294, lysine 299, lysine 306, lysine 328, and lysine 334. FAD contacts are provided by tryptophan 337, histidine 338, proline 339, threonine 341, histidine 354, arginine 356, tryptophan 361, and threonine 362. Residue lysine 381 forms a Glycyl lysine isopeptide (Lys-Gly) (interchain with G-Cter in ubiquitin) linkage. NADPH-binding residues include isoleucine 411, arginine 446, and threonine 481. Lysine 506 is covalently cross-linked (Glycyl lysine isopeptide (Lys-Gly) (interchain with G-Cter in ubiquitin)). Arginine 513 provides a ligand contact to NADPH. A Glycyl lysine isopeptide (Lys-Gly) (interchain with G-Cter in ubiquitin) cross-link involves residue lysine 567.

As to quaternary structure, component of the phagocyte NADPH oxidase core complex/cytochrome b558 complex, composed of CYBB (heavy chain (beta)) and CYBA (light chain (alpha)). Component of the phagocyte NADPH oxidase complex composed of an obligatory core heterodimer formed by the membrane proteins CYBA and CYBB and the cytosolic regulatory subunits NCF1/p47-phox, NCF2/p67-phox, NCF4/p40-phox and the small GTPase RAC1 or RAC2. Interacts with NCF1 (phosphorylated form). Interacts with NCF2; the interaction is enhanced in the presence of GBP7. Interacts with RAC2. Interacts with RAC1. Interacts with calprotectin (S100A8/9). Interacts with NRROS; the interaction is direct and impairs formation of a stable NADPH oxidase complex. Interacts with CYBC1; CYBC1 may act as a chaperone stabilizing Cytochrome b-245 heterodimer. The CYBA-CYBB complex interacts with GBP7. The cofactor is FAD. Post-translationally, glycosylated. Phosphorylated on Ser and Thr residues by PKC during neutrophils activation. Phosphorylation enhances the NADPH oxidase activity and stimulates its interaction with RAC2, NCF2/p67-phox, and NCF1/p47-phox. In terms of processing, undergoes 'Lys-48'-linked polyubiquitination, likely by RNF145, triggering endoplasmic reticulum-associated degradation.

The protein localises to the cell membrane. The catalysed reaction is NADPH + 2 O2 = 2 superoxide + NADP(+) + H(+). In terms of biological role, catalytic subunit of the phagocyte NADPH oxidase complex that mediates the transfer of electrons from cytosolic NADPH to O2 to produce the superoxide anion (O2(-)). In the activated complex, electrons are first transferred from NADPH to flavin adenine dinucleotide (FAD) and subsequently transferred via two heme molecules to molecular oxygen, producing superoxide through an outer-sphere reaction. Activation of the NADPH oxidase complex is initiated by the assembly of cytosolic subunits of the NADPH oxidase complex with the core NADPH oxidase complex to form a complex at the plasma membrane or phagosomal membrane. This activation process is initiated by phosphorylation dependent binding of the cytosolic NCF1/p47-phox subunit to the C-terminus of CYBA/p22-phox. NADPH oxidase complex assembly is impaired through interaction with NRROS. In Bos taurus (Bovine), this protein is NADPH oxidase 2.